A 436-amino-acid chain; its full sequence is Histone acetyltransferase type B subunit 2 (436 aa).

Positions 1–19 (MEPYDDGFIEEQEEQEEER) are enriched in acidic residues. The interval 1–22 (MEPYDDGFIEEQEEQEEERTEE) is disordered. 5 WD repeats span residues 136–176 (DHKG…SLPT), 187–227 (GHTK…KGNK), 237–277 (HHSS…TTRA), 284–324 (QHRD…TKLH), and 328–368 (CHTD…EEQT). The tract at residues 370 to 374 (DDAQD) is interaction with the histone H4 N-terminus. The WD 6 repeat unit spans residues 385–425 (GHTNRISDFSWNLNDPWVLCSAAEDNLLQVWKVADAIVGKD).

This sequence belongs to the WD repeat RBAP46/RBAP48/MSI1 family. As to quaternary structure, component of the HAT-B complex composed of at least hat1 and hat2. The HAT-B complex binds to histone H4 tail.

The protein localises to the cytoplasm. Its subcellular location is the nucleus. In terms of biological role, regulatory subunit of the histone acetylase B (HAT-B) complex. The complex acetylates 'Lys-12' of histone H4 which is required for telomeric silencing. The protein is Histone acetyltransferase type B subunit 2 (hat2) of Aspergillus oryzae (strain ATCC 42149 / RIB 40) (Yellow koji mold).